A 396-amino-acid chain; its full sequence is Ribosomal RNA large subunit methyltransferase I (396 aa).

Residues 2–79 (AIRIKLKPGR…REEEIDREFF (78 aa)) enclose the PUA domain.

It belongs to the methyltransferase superfamily. RlmI family.

The protein localises to the cytoplasm. It catalyses the reaction cytidine(1962) in 23S rRNA + S-adenosyl-L-methionine = 5-methylcytidine(1962) in 23S rRNA + S-adenosyl-L-homocysteine + H(+). Specifically methylates the cytosine at position 1962 (m5C1962) of 23S rRNA. The chain is Ribosomal RNA large subunit methyltransferase I from Shewanella baltica (strain OS155 / ATCC BAA-1091).